A 111-amino-acid polypeptide reads, in one-letter code: MAKVYANANKVAARHVDVRKRVKEERDGVTRRARTNLARANKTTRITKEGYFPASIEEVDGDVDFHTVLHAPNAFALEFGHAPSGFFAGTDTKPPDPEYILTRAAIGGTVS.

This is Gene 21 protein (21) from Mycobacterium phage D29 (Mycobacteriophage D29).